Consider the following 189-residue polypeptide: 6,7-dimethyl-8-ribityllumazine synthase (189 aa).

Residues W31, 65-67 (SFE), and 89-91 (CVI) each bind 5-amino-6-(D-ribitylamino)uracil. 94 to 95 (ET) contributes to the (2S)-2-hydroxy-3-oxobutyl phosphate binding site. The Proton donor role is filled by H97. F122 lines the 5-amino-6-(D-ribitylamino)uracil pocket. R136 contacts (2S)-2-hydroxy-3-oxobutyl phosphate.

This sequence belongs to the DMRL synthase family.

The catalysed reaction is (2S)-2-hydroxy-3-oxobutyl phosphate + 5-amino-6-(D-ribitylamino)uracil = 6,7-dimethyl-8-(1-D-ribityl)lumazine + phosphate + 2 H2O + H(+). It functions in the pathway cofactor biosynthesis; riboflavin biosynthesis; riboflavin from 2-hydroxy-3-oxobutyl phosphate and 5-amino-6-(D-ribitylamino)uracil: step 1/2. Functionally, catalyzes the formation of 6,7-dimethyl-8-ribityllumazine by condensation of 5-amino-6-(D-ribitylamino)uracil with 3,4-dihydroxy-2-butanone 4-phosphate. This is the penultimate step in the biosynthesis of riboflavin. The chain is 6,7-dimethyl-8-ribityllumazine synthase from Flavobacterium psychrophilum (strain ATCC 49511 / DSM 21280 / CIP 103535 / JIP02/86).